We begin with the raw amino-acid sequence, 69 residues long: Pancreatic propolypeptide YG (69 aa).

This sequence belongs to the NPY family.

Its subcellular location is the secreted. In Lophius americanus (American angler), this protein is Pancreatic propolypeptide YG.